A 36-amino-acid chain; its full sequence is Esculentin-2R (36 aa).

A disulfide bond links Cys30 and Cys36.

In terms of tissue distribution, expressed by the skin glands.

The protein resides in the secreted. Antimicrobial peptide. This is Esculentin-2R from Pelophylax ridibundus (Marsh frog).